Reading from the N-terminus, the 676-residue chain is UvrABC system protein B (676 aa).

One can recognise a Helicase ATP-binding domain in the interval 26-414 (EGLDAGLAHQ…SAGEIADQVV (389 aa)). An ATP-binding site is contributed by 39-46 (GVTGSGKT). The Beta-hairpin signature appears at 92-115 (YYDYYQPEAYVPTTDTFIEKDASV). The 167-residue stretch at 432–598 (QVDDLLSEIR…ALKRNIKDIM (167 aa)) folds into the Helicase C-terminal domain. The UVR domain maps to 636–671 (EKEISRLEAAMYQHAQDLEFELAAEKRDEIEKLRAQ).

Belongs to the UvrB family. Forms a heterotetramer with UvrA during the search for lesions. Interacts with UvrC in an incision complex.

The protein resides in the cytoplasm. Functionally, the UvrABC repair system catalyzes the recognition and processing of DNA lesions. A damage recognition complex composed of 2 UvrA and 2 UvrB subunits scans DNA for abnormalities. Upon binding of the UvrA(2)B(2) complex to a putative damaged site, the DNA wraps around one UvrB monomer. DNA wrap is dependent on ATP binding by UvrB and probably causes local melting of the DNA helix, facilitating insertion of UvrB beta-hairpin between the DNA strands. Then UvrB probes one DNA strand for the presence of a lesion. If a lesion is found the UvrA subunits dissociate and the UvrB-DNA preincision complex is formed. This complex is subsequently bound by UvrC and the second UvrB is released. If no lesion is found, the DNA wraps around the other UvrB subunit that will check the other stand for damage. The protein is UvrABC system protein B of Vibrio parahaemolyticus serotype O3:K6 (strain RIMD 2210633).